The primary structure comprises 1085 residues: Extracellular calcium-sensing receptor (1085 aa).

The first 19 residues, M1–S19, serve as a signal peptide directing secretion. Topologically, residues A20 to E611 are extracellular. Residues P23–P189 form a ligand-binding 1 (LB1) region. An intrachain disulfide couples C61 to C102. R67–W71 serves as a coordination point for phosphate. Ca(2+)-binding residues include I82, S85, L88, and L89. N91 carries an N-linked (GlcNAc...) asparagine glycan. Position 101 (T101) interacts with Ca(2+). N131 carries an N-linked (GlcNAc...) asparagine glycan. Residue T146 participates in Ca(2+) binding. S148, A169, and S171 together coordinate L-tryptophan. Ca(2+)-binding residues include S171, P189, D191, E232, and D235. Residues N190 to A325 form a ligand-binding 2 (LB2) region. 7 disulfides stabilise this stretch: C237–C562, C359–C396, C438–C450, C543–C563, C547–C566, C569–C583, and C586–C599. The spermine site is built by D239 and S241. N-linked (GlcNAc...) asparagine glycans are attached at residues N262 and N288. Residue E298 coordinates Ca(2+). E298 provides a ligand contact to L-tryptophan. N-linked (GlcNAc...) asparagine glycosylation is present at N401. R416–S418 lines the phosphate pocket. N447, N469, and N489 each carry an N-linked (GlcNAc...) asparagine glycan. Y490 serves as a coordination point for Ca(2+). Residue N542 is glycosylated (N-linked (GlcNAc...) asparagine). Positions C543–F613 are cysteine-rich (CR). G558 serves as a coordination point for Ca(2+). N595 carries N-linked (GlcNAc...) asparagine glycosylation. Residues P612–K637 traverse the membrane as a helical segment. The Cytoplasmic portion of the chain corresponds to F638–R649. The intracellular loop 1 (ICL1) stretch occupies residues F638–R649. A helical membrane pass occupies residues E650–F669. Topologically, residues I670–D675 are extracellular. The chain crosses the membrane as a helical span at residues W676–K699. Over T700 to N723 the chain is Cytoplasmic. The intracellular loop 2 (ICL2) stretch occupies residues T700–N723. Residues L724–T746 form a helical membrane-spanning segment. Topologically, residues A747–S770 are extracellular. Residues L771–F790 traverse the membrane as a helical segment. Over F791–K806 the chain is Cytoplasmic. The intracellular loop 3 (ICL3) stretch occupies residues F791 to K806. The helical transmembrane segment at F807–T829 threads the bilayer. The Extracellular portion of the chain corresponds to Y830–F833. Residues V834 to F855 form a helical membrane-spanning segment. Residues N856–S1085 are Cytoplasmic-facing. The tract at residues N856–S1085 is C-terminus. The segment at A881 to S901 is interaction with RNF19A. The residue at position 889 (T889) is a Phosphothreonine. Residues R891 to R899 are arginine-rich retention motif. A phosphoserine mark is found at S893, S900, and S921. Residues S893–P938 show a composition bias toward low complexity. Disordered stretches follow at residues S893–C969 and S1034–S1058. The span at Q950–Q960 shows a compositional bias: pro residues. S1068 is subject to Phosphoserine.

It belongs to the G-protein coupled receptor 3 family. As to quaternary structure, homodimer; disulfide-linked. Interacts with VCP. Interacts with ARRB1. Post-translationally, phosphorylation at Thr-889 by PKC impairs coupling with G(q)/G(11) G-proteins, while it does not affect G(i)/G(o)-coupling. Phosphorylation at Ser-893 by PKC and Ser-900 by PKA promote plasma membrane localization. Ubiquitinated by RNF19A; which induces proteasomal degradation.

It localises to the cell membrane. In resting state, adopts an open conformation, anion-binding promoting the inactive configuration. Upon aromatic amino acid-binding, the groove in the extracellular venus flytrap module is closed, thereby inducing the formation of a novel homodimer interface between subunits. Calcium ions stabilize the active state by enhancing homodimer interactions between membrane-proximal domains to fully activate the receptor. Upon activation, the homodimer adopts an asymmetric configuration of the 7-transmembrane region that primes one protomer for G-protein coupling. G-protein binding expands the transmembrane dimer interface; the restriction imposed by the receptor dimer, in combination with intracellular loop 2 (ICL2), enables G-protein activation by facilitating conformational transition of G-protein alpha. Coupling to different classes of G-proteins results in distinct CASR-G-protein interfaces. In terms of biological role, G-protein-coupled receptor that senses changes in the extracellular concentration of calcium ions and plays a key role in maintaining calcium homeostasis. Senses fluctuations in the circulating calcium concentration: activated by elevated circulating calcium, leading to decreased parathyroid hormone (PTH) secretion in parathyroid glands. In kidneys, acts as a key regulator of renal tubular calcium resorption. Ligand binding causes a conformation change that triggers signaling via guanine nucleotide-binding proteins (G-proteins) and modulates the activity of downstream effectors. CASR is coupled with different G(q)/G(11), G(i)/G(o)- or G(s)-classes of G-proteins depending on the context. In the parathyroid and kidney, CASR signals through G(q)/G(11) and G(i)/G(o) G-proteins: G(q)/G(11) coupling activates phospholipase C-beta, releasing diacylglycerol (DAG) and inositol 1,4,5-trisphosphate (IP3) second messengers, while G(i)/G(o) coupling mediates inhibition of adenylate cyclase activity. The G-protein-coupled receptor activity is activated by a co-agonist mechanism: aromatic amino acids, such as Trp or Phe, act concertedly with divalent cations, such as calcium or magnesium, to achieve full receptor activation. Acts as an activator of the NLRP3 inflammasome via G(i)/G(o)-mediated signaling: down-regulation of cyclic AMP (cAMP) relieving NLRP3 inhibition by cAMP. Acts as a regulator of proton-sensing receptor GPR68 in a seesaw manner: CASR-mediated signaling inhibits GPR68 signaling in response to extracellular calcium, while GPR68 inhibits CASR in presence of extracellular protons. In Bos taurus (Bovine), this protein is Extracellular calcium-sensing receptor (CASR).